A 179-amino-acid chain; its full sequence is Large ribosomal subunit protein uL6 (179 aa).

It belongs to the universal ribosomal protein uL6 family. As to quaternary structure, part of the 50S ribosomal subunit.

This protein binds to the 23S rRNA, and is important in its secondary structure. It is located near the subunit interface in the base of the L7/L12 stalk, and near the tRNA binding site of the peptidyltransferase center. The polypeptide is Large ribosomal subunit protein uL6 (Streptomyces griseus subsp. griseus (strain JCM 4626 / CBS 651.72 / NBRC 13350 / KCC S-0626 / ISP 5235)).